The sequence spans 298 residues: Tyrosine recombinase XerC (298 aa).

In terms of domain architecture, Core-binding (CB) spans 1–84 (MNHIQEAFLN…TLRTFYEYWM (84 aa)). The region spanning 105–286 (YLPQFFYEEE…SNQQLRKVYL (182 aa)) is the Tyr recombinase domain. Residues R145, K169, H238, R241, and H264 contribute to the active site. Y273 functions as the O-(3'-phospho-DNA)-tyrosine intermediate in the catalytic mechanism.

Belongs to the 'phage' integrase family. XerC subfamily. In terms of assembly, forms a cyclic heterotetrameric complex composed of two molecules of XerC and two molecules of XerD.

Its subcellular location is the cytoplasm. In terms of biological role, site-specific tyrosine recombinase, which acts by catalyzing the cutting and rejoining of the recombining DNA molecules. The XerC-XerD complex is essential to convert dimers of the bacterial chromosome into monomers to permit their segregation at cell division. It also contributes to the segregational stability of plasmids. This is Tyrosine recombinase XerC from Staphylococcus aureus (strain MRSA252).